Reading from the N-terminus, the 63-residue chain is Small ribosomal subunit protein bS21 (63 aa).

Belongs to the bacterial ribosomal protein bS21 family.

The chain is Small ribosomal subunit protein bS21 from Bacteroides fragilis (strain ATCC 25285 / DSM 2151 / CCUG 4856 / JCM 11019 / LMG 10263 / NCTC 9343 / Onslow / VPI 2553 / EN-2).